We begin with the raw amino-acid sequence, 460 residues long: Chromosomal replication initiator protein DnaA 2 (460 aa).

The domain I, interacts with DnaA modulators stretch occupies residues 1 to 68; it reads MRAWEDFLLL…KTSLVNNNGK (68 aa). A domain II region spans residues 68–102; sequence KLIRVHITSLDKTAPFYKEKQIQQEKTAYFTMQYG. The interval 103–321 is domain III, AAA+ region; the sequence is NVNPEMTFGN…DALKLLSKRV (219 aa). ATP contacts are provided by Gly151, Gly153, Lys154, and Thr155. Residues 322-460 form a domain IV, binds dsDNA region; the sequence is AYKKLAQQLL…EFFPEEEISC (139 aa).

The protein belongs to the DnaA family. As to quaternary structure, oligomerizes as a right-handed, spiral filament on DNA at oriC.

Its subcellular location is the cytoplasm. Plays an essential role in the initiation and regulation of chromosomal replication. ATP-DnaA binds to the origin of replication (oriC) to initiate formation of the DNA replication initiation complex once per cell cycle. Binds the DnaA box (a 9 base pair repeat at the origin) and separates the double-stranded (ds)DNA. Forms a right-handed helical filament on oriC DNA; dsDNA binds to the exterior of the filament while single-stranded (ss)DNA is stabiized in the filament's interior. The ATP-DnaA-oriC complex binds and stabilizes one strand of the AT-rich DNA unwinding element (DUE), permitting loading of DNA polymerase. After initiation quickly degrades to an ADP-DnaA complex that is not apt for DNA replication. Binds acidic phospholipids. The polypeptide is Chromosomal replication initiator protein DnaA 2 (Chlamydia caviae (strain ATCC VR-813 / DSM 19441 / 03DC25 / GPIC) (Chlamydophila caviae)).